Reading from the N-terminus, the 574-residue chain is Urease subunit alpha (574 aa).

Positions 131–574 constitute a Urease domain; sequence GAIDSHIHFI…LPMAQRYLLL (444 aa). Ni(2+) contacts are provided by His136, His138, and Lys219. An N6-carboxylysine modification is found at Lys219. His221 contacts substrate. Ni(2+)-binding residues include His248 and His274. His322 functions as the Proton donor in the catalytic mechanism. Position 362 (Asp362) interacts with Ni(2+). The disordered stretch occupies residues 384 to 403; the sequence is KVQRGPLPEDAANPRGSRND.

It belongs to the metallo-dependent hydrolases superfamily. Urease alpha subunit family. In terms of assembly, heterotrimer of UreA (gamma), UreB (beta) and UreC (alpha) subunits. Three heterotrimers associate to form the active enzyme. Requires Ni cation as cofactor. Post-translationally, carboxylation allows a single lysine to coordinate two nickel ions.

The protein localises to the cytoplasm. It catalyses the reaction urea + 2 H2O + H(+) = hydrogencarbonate + 2 NH4(+). It participates in nitrogen metabolism; urea degradation; CO(2) and NH(3) from urea (urease route): step 1/1. The polypeptide is Urease subunit alpha (Prochlorococcus marinus (strain MIT 9313)).